The chain runs to 83 residues: uncharacterized protein (83 aa).

Transmembrane regions (helical) follow at residues 4–24 (AILS…GVLM), 32–52 (IGNI…LKAF), and 54–74 (YYDL…IIIG).

The protein resides in the cell membrane. This is an uncharacterized protein from Methanocaldococcus jannaschii (strain ATCC 43067 / DSM 2661 / JAL-1 / JCM 10045 / NBRC 100440) (Methanococcus jannaschii).